We begin with the raw amino-acid sequence, 285 residues long: Glutamate racemase (285 aa).

Residues 28–29 and 60–61 each bind substrate; these read DS and YG. Cys92 functions as the Proton donor/acceptor in the catalytic mechanism. 93-94 contacts substrate; the sequence is NT. Cys204 functions as the Proton donor/acceptor in the catalytic mechanism. 205–206 contacts substrate; that stretch reads TH.

The protein belongs to the aspartate/glutamate racemases family.

The enzyme catalyses L-glutamate = D-glutamate. It functions in the pathway cell wall biogenesis; peptidoglycan biosynthesis. In terms of biological role, provides the (R)-glutamate required for cell wall biosynthesis. This chain is Glutamate racemase, found in Escherichia coli O9:H4 (strain HS).